Here is a 390-residue protein sequence, read N- to C-terminus: S-adenosylmethionine synthase (390 aa).

An ATP-binding site is contributed by histidine 17. Residue aspartate 19 coordinates Mg(2+). Residue glutamate 45 participates in K(+) binding. Residues glutamate 58 and glutamine 101 each coordinate L-methionine. The tract at residues 101–111 (QSPDIGQGVDT) is flexible loop. Residues 160–162 (DGK), 226–227 (RF), aspartate 235, 241–242 (RK), alanine 258, and lysine 262 contribute to the ATP site. Aspartate 235 is an L-methionine binding site. Lysine 266 provides a ligand contact to L-methionine.

This sequence belongs to the AdoMet synthase family. In terms of assembly, homotetramer; dimer of dimers. Requires Mg(2+) as cofactor. The cofactor is K(+).

Its subcellular location is the cytoplasm. The enzyme catalyses L-methionine + ATP + H2O = S-adenosyl-L-methionine + phosphate + diphosphate. It participates in amino-acid biosynthesis; S-adenosyl-L-methionine biosynthesis; S-adenosyl-L-methionine from L-methionine: step 1/1. Catalyzes the formation of S-adenosylmethionine (AdoMet) from methionine and ATP. The overall synthetic reaction is composed of two sequential steps, AdoMet formation and the subsequent tripolyphosphate hydrolysis which occurs prior to release of AdoMet from the enzyme. The chain is S-adenosylmethionine synthase from Anaeromyxobacter dehalogenans (strain 2CP-1 / ATCC BAA-258).